Consider the following 270-residue polypeptide: Putative phosphoenolpyruvate synthase regulatory protein (270 aa).

150 to 157 (GVSRCGKT) is an ADP binding site.

This sequence belongs to the pyruvate, phosphate/water dikinase regulatory protein family. PSRP subfamily.

The catalysed reaction is [pyruvate, water dikinase] + ADP = [pyruvate, water dikinase]-phosphate + AMP + H(+). It catalyses the reaction [pyruvate, water dikinase]-phosphate + phosphate + H(+) = [pyruvate, water dikinase] + diphosphate. Bifunctional serine/threonine kinase and phosphorylase involved in the regulation of the phosphoenolpyruvate synthase (PEPS) by catalyzing its phosphorylation/dephosphorylation. The polypeptide is Putative phosphoenolpyruvate synthase regulatory protein (Shewanella oneidensis (strain ATCC 700550 / JCM 31522 / CIP 106686 / LMG 19005 / NCIMB 14063 / MR-1)).